The following is a 302-amino-acid chain: Small ribosomal subunit protein uS3 (302 aa).

The region spanning 17 to 86 is the KH type-2 domain; that stretch reads IDEFFAEELA…DPQIDVQEVE (70 aa). A disordered region spans residues 222–302; it reads EDADAEDADA…EMDDEDGGAE (81 aa).

The protein belongs to the universal ribosomal protein uS3 family. Part of the 30S ribosomal subunit.

Binds the lower part of the 30S subunit head. This is Small ribosomal subunit protein uS3 from Halobacterium salinarum (strain ATCC 700922 / JCM 11081 / NRC-1) (Halobacterium halobium).